Reading from the N-terminus, the 374-residue chain is Eukaryotic translation initiation factor 3 subunit M (374 aa).

In terms of domain architecture, PCI spans 180–339 (EAAKVMVELL…KRVVVSHSTH (160 aa)).

The protein belongs to the eIF-3 subunit M family. Component of the eukaryotic translation initiation factor 3 (eIF-3) complex, which is composed of 13 subunits: eif3a, eif3b, eif3c, eif3d, eif3e, eif3f, eif3g, eif3h, eif3i, eif3j, eif3k, eif3l and eif3m.

The protein localises to the cytoplasm. Functionally, component of the eukaryotic translation initiation factor 3 (eIF-3) complex, which is involved in protein synthesis of a specialized repertoire of mRNAs and, together with other initiation factors, stimulates binding of mRNA and methionyl-tRNAi to the 40S ribosome. The eIF-3 complex specifically targets and initiates translation of a subset of mRNAs involved in cell proliferation. The protein is Eukaryotic translation initiation factor 3 subunit M (eif3m) of Xenopus tropicalis (Western clawed frog).